Here is a 404-residue protein sequence, read N- to C-terminus: Probable sugar efflux transporter (404 aa).

A run of 12 helical transmembrane segments spans residues 15 to 35, 51 to 71, 85 to 105, 109 to 129, 137 to 157, 168 to 188, 209 to 229, 245 to 265, 276 to 296, 299 to 319, 333 to 353, and 363 to 383; these read VITFALAGFVFNTTEFIPVAL, GLIITVYAWVVSLMSLPFMLL, LVLFILSHLLSVIAWDFWVLV, IGVALTHSIFWAITASLVIRV, QAIGLLAIGCSLAMILGLPLG, ATFAIIALIAIGILCLFYQLL, PLLLGLYALTMIIISAHFTAY, SMATFVLFVFGLSGITASLLF, FILFSMGLLTATLLLLFIASQ, WTMFLLTFFWGIGIAGIGLGL, VAMAIYSGIYNIGIGAGALLG, and AYIGVAGALFAVFGLVLFILV.

This sequence belongs to the major facilitator superfamily. SotB (TC 2.A.1.2) family.

It is found in the cell inner membrane. Involved in the efflux of sugars. The physiological role may be the reduction of the intracellular concentration of toxic sugars or sugar metabolites. The sequence is that of Probable sugar efflux transporter from Pasteurella multocida (strain Pm70).